We begin with the raw amino-acid sequence, 402 residues long: Phosphoglycerate kinase (402 aa).

Substrate is bound by residues 24–26 (DFN), Arg-40, 63–66 (HFGR), Arg-122, and Arg-155. Residues Lys-206, Gly-297, Glu-328, and 357-360 (GGDS) contribute to the ATP site.

It belongs to the phosphoglycerate kinase family. In terms of assembly, monomer.

It localises to the cytoplasm. The enzyme catalyses (2R)-3-phosphoglycerate + ATP = (2R)-3-phospho-glyceroyl phosphate + ADP. The protein operates within carbohydrate degradation; glycolysis; pyruvate from D-glyceraldehyde 3-phosphate: step 2/5. This Synechococcus sp. (strain CC9311) protein is Phosphoglycerate kinase.